A 937-amino-acid polypeptide reads, in one-letter code: Translation initiation factor IF-2 (937 aa).

Disordered stretches follow at residues 61–156 (IQAN…KAKQ) and 171–274 (LTQS…SHKI). Positions 179 to 196 (AKKEISEVKKQEQEIKRH) are enriched in basic and acidic residues. A compositionally biased stretch (basic residues) spans 197–208 (ENIKRRTGFRVI). The segment covering 237 to 252 (EDIKKEWQEKDKQEAK) has biased composition (basic and acidic residues). In terms of domain architecture, tr-type G spans 436 to 605 (ERPPVVTIMG…LIQADIMELK (170 aa)). The tract at residues 445-452 (GHVDHGKT) is G1. 445-452 (GHVDHGKT) is a binding site for GTP. The G2 stretch occupies residues 470–474 (GITQH). The segment at 491–494 (DTPG) is G3. Residues 491–495 (DTPGH) and 545–548 (NKMD) contribute to the GTP site. Positions 545–548 (NKMD) are G4. The segment at 581-583 (SAK) is G5.

Belongs to the TRAFAC class translation factor GTPase superfamily. Classic translation factor GTPase family. IF-2 subfamily.

It localises to the cytoplasm. One of the essential components for the initiation of protein synthesis. Protects formylmethionyl-tRNA from spontaneous hydrolysis and promotes its binding to the 30S ribosomal subunits. Also involved in the hydrolysis of GTP during the formation of the 70S ribosomal complex. The polypeptide is Translation initiation factor IF-2 (Helicobacter pylori (strain G27)).